Consider the following 257-residue polypeptide: Major prion protein (257 aa).

The first 24 residues, 1–24 (MVKSHIGSWLLVLFVATWSDIGFC), serve as a signal peptide directing secretion. An interaction with ADGRG6 region spans residues 25-41 (KKRPKPGGGWNTGGSRY). An interaction with GRB2, ERI3 and SYN1 region spans residues 25-234 (KKRPKPGGGW…ESEAYYQRGA (210 aa)). Positions 27 to 114 (RPKPGGGWNT…KPSKPKTNMK (88 aa)) are disordered. Tandem repeats lie at residues 54 to 62 (PQGGGGWGQ), 63 to 70 (PHGGGWGQ), 71 to 78 (PHGGGWGQ), 79 to 86 (PHGGGWGQ), and 87 to 95 (PHGGGGWGQ). Residues 54–95 (PQGGGGWGQPHGGGWGQPHGGGWGQPHGGGWGQPHGGGGWGQ) form a 5 X 8 AA tandem repeats of P-H-G-G-G-W-G-Q region. The segment covering 55–101 (QGGGGWGQPHGGGWGQPHGGGWGQPHGGGWGQPHGGGGWGQGGGSHG) has biased composition (gly residues). Residues His-64, Gly-65, Gly-66, His-72, Gly-73, Gly-74, His-80, Gly-81, Gly-82, His-88, Gly-90, and Gly-91 each coordinate Cu(2+). Residues Cys-183 and Cys-218 are joined by a disulfide bond. Asn-185 and Asn-201 each carry an N-linked (GlcNAc...) asparagine glycan. Ala-234 carries GPI-anchor amidated alanine lipidation. Positions 235–257 (SAILFSPPPVILLISLLILLIVG) are cleaved as a propeptide — removed in mature form.

Belongs to the prion family. In terms of assembly, monomer and homodimer. Has a tendency to aggregate into amyloid fibrils containing a cross-beta spine, formed by a steric zipper of superposed beta-strands. Soluble oligomers may represent an intermediate stage on the path to fibril formation. Copper binding may promote oligomerization. Interacts with GRB2, APP, ERI3/PRNPIP and SYN1. Mislocalized cytosolically exposed PrP interacts with MGRN1; this interaction alters MGRN1 subcellular location and causes lysosomal enlargement. Interacts with APP. Interacts with KIAA1191. Interacts with ADGRG6.

The protein resides in the cell membrane. The protein localises to the golgi apparatus. Its function is as follows. Its primary physiological function is unclear. May play a role in neuronal development and synaptic plasticity. May be required for neuronal myelin sheath maintenance. May promote myelin homeostasis through acting as an agonist for ADGRG6 receptor. May play a role in iron uptake and iron homeostasis. Soluble oligomers are toxic to cultured neuroblastoma cells and induce apoptosis (in vitro). Association with GPC1 (via its heparan sulfate chains) targets PRNP to lipid rafts. Also provides Cu(2+) or Zn(2+) for the ascorbate-mediated GPC1 deaminase degradation of its heparan sulfate side chains. This Neovison vison (American mink) protein is Major prion protein (PRNP).